A 309-amino-acid chain; its full sequence is SERTA domain-containing protein 2 (309 aa).

3 disordered regions span residues 1-30 (MLGK…GPSR), 79-114 (EGSL…CDLG), and 175-220 (PTST…MDSL). Residues 8–18 (RKFDEHEDGLE) are compositionally biased toward basic and acidic residues. Residues 33-80 (YTLQRQTIFNISLMKLYNHRPLTEPSLQKTVLINNMLRRIQEELKQEG) enclose the SERTA domain. Low complexity-rich tracts occupy residues 89–99 (SSQPSNSLSDS) and 175–189 (PTST…AAPE). Residues 204–216 (EGPEEGRTDDSRF) are compositionally biased toward basic and acidic residues. Residues 230–306 (TGFLTDLTLD…TELDHIMEVL (77 aa)) are required for transactivation activity. A Nuclear export signal (NES) motif is present at residues 233 to 238 (LTDLTL).

In terms of assembly, interacts with XPO1; which mediates nuclear export. Interacts with TFDP1; modulates transactivation activity of TFDP1/E2F complexes. In terms of processing, polyubiquitinated, which promotes proteasomal degradation. Expressed in white and brown adipose tissue.

The protein resides in the nucleus. Its subcellular location is the cytoplasm. Acts at E2F-responsive promoters as coregulator to integrate signals provided by PHD- and/or bromodomain-containing transcription factors. May act as coactivator as well as corepressor of E2F1-TFDP1 and E2F4-TFDP1 complexes on E2F consensus binding sites, which would activate or inhibit E2F-target genes expression. Modulates fat storage by down-regulating the expression of key genes involved in adipocyte lipolysis, thermogenesis and oxidative metabolism. This is SERTA domain-containing protein 2 (Sertad2) from Mus musculus (Mouse).